Reading from the N-terminus, the 401-residue chain is Phosphoglycerate kinase (401 aa).

Substrate-binding positions include 24 to 26 (DFN), arginine 40, 63 to 66 (HFGR), arginine 122, and arginine 155. Residues lysine 206, glycine 297, glutamate 328, and 357-360 (GGDS) contribute to the ATP site.

This sequence belongs to the phosphoglycerate kinase family. Monomer.

It is found in the cytoplasm. It carries out the reaction (2R)-3-phosphoglycerate + ATP = (2R)-3-phospho-glyceroyl phosphate + ADP. Its pathway is carbohydrate degradation; glycolysis; pyruvate from D-glyceraldehyde 3-phosphate: step 2/5. The protein is Phosphoglycerate kinase of Gloeothece citriformis (strain PCC 7424) (Cyanothece sp. (strain PCC 7424)).